The sequence spans 728 residues: MSNETKCPFNHTAGSGTTNKDWWPNQLNLNVLHRHSALSDPMDPDFDYAEAFKKLDLAAVKQDLHALMTTSQDWWPADFGHYGGLFVRMAWHSAGTYRTADGRGGAGGGQQRFAPLNSWPDNVSLDKARRLLWPIKQKYGRNISWADLLILTGNVALESMGFKTFGYAGGRADTWEPDDVYWGSEKIWLELSGGPNSRYTGKRELESPLAAVQMGLIYVNPEGPDGNPDPVAAAHDIRETFARMAMNDEETVALIAGGHTFGKTHGAGPASNVGPEPEAAGLEEQGLGWKSTFGTGKGKDTITSGLEVTWTSTPTKWSNDFFKHLFSYEWELTKSPAGAHQWVAKDAGEVIPDAYDASKKHRPTMLTTDLSLRFDPAYEKISRRFYENPAEFADAFARAWFKLTHRDMGPRARYLGPEVPAEHLLWQDPIPAVDHPLIDAADVAALKAKVLATGLSVSQLVSTAWASAATFRGSDKRGGANGARIRLAPQKDWEVNQPVALAAVLETLEGVQKAFNDAQTDGKKVSLADLIVLAGAAGVEQAAKNAGISISVPFAPGRMDASQEETDVDAMAVLEPVADGFRNYLKSAYKTPAEALLVDKAQLLTLTAPEMTVLVGGLRVLGANVGDSKHGVFTDRPGTLSNDFFANLLDMGTEWKPVSAANDVFEGRDRATGAVKWTGTRVDLIFGSHSQLRALAEVYGSADAQEKFVRDFVAAWNKVMNLDRFDLA.

A cross-link (tryptophyl-tyrosyl-methioninium (Trp-Tyr) (with M-244)) is located at residues Trp91–Tyr218. Catalysis depends on His92, which acts as the Proton acceptor. Positions Tyr218–Met244 form a cross-link, tryptophyl-tyrosyl-methioninium (Tyr-Met) (with W-91). Position 259 (His259) interacts with heme b.

It belongs to the peroxidase family. Peroxidase/catalase subfamily. In terms of assembly, homodimer or homotetramer. It depends on heme b as a cofactor. Post-translationally, formation of the three residue Trp-Tyr-Met cross-link is important for the catalase, but not the peroxidase activity of the enzyme.

The catalysed reaction is H2O2 + AH2 = A + 2 H2O. The enzyme catalyses 2 H2O2 = O2 + 2 H2O. Functionally, bifunctional enzyme with both catalase and broad-spectrum peroxidase activity. The polypeptide is Catalase-peroxidase 1 (Burkholderia orbicola (strain MC0-3)).